Consider the following 128-residue polypeptide: Putative histidinol dehydrogenase (128 aa).

A disordered region spans residues 21 to 84; sequence QRPDIAPRHH…EGQEKASGRR (64 aa). Composition is skewed to basic and acidic residues over residues 34–50 and 72–81; these read HRAEREAVEADRSRRTA and QGREGQEKAS.

The protein belongs to the histidinol dehydrogenase family.

The enzyme catalyses L-histidinol + 2 NAD(+) + H2O = L-histidine + 2 NADH + 3 H(+). The protein operates within amino-acid biosynthesis; L-histidine biosynthesis; L-histidine from 5-phospho-alpha-D-ribose 1-diphosphate: step 9/9. Catalyzes the sequential NAD-dependent oxidations of L-histidinol to L-histidinaldehyde and then to L-histidine. This is Putative histidinol dehydrogenase (hisD) from Azospirillum brasilense.